The sequence spans 216 residues: Nucleoside triphosphate pyrophosphatase (216 aa).

Catalysis depends on aspartate 82, which acts as the Proton acceptor.

Belongs to the Maf family. It depends on a divalent metal cation as a cofactor.

The protein localises to the cytoplasm. It catalyses the reaction a ribonucleoside 5'-triphosphate + H2O = a ribonucleoside 5'-phosphate + diphosphate + H(+). The catalysed reaction is a 2'-deoxyribonucleoside 5'-triphosphate + H2O = a 2'-deoxyribonucleoside 5'-phosphate + diphosphate + H(+). Functionally, nucleoside triphosphate pyrophosphatase. May have a dual role in cell division arrest and in preventing the incorporation of modified nucleotides into cellular nucleic acids. The protein is Nucleoside triphosphate pyrophosphatase of Mycobacterium ulcerans (strain Agy99).